We begin with the raw amino-acid sequence, 183 residues long: Beta-defensin 129 (183 aa).

An N-terminal signal peptide occupies residues 1–19 (MKLLFPIFASLMLQYQVNT). Intrachain disulfides connect cysteine 27–cysteine 53, cysteine 34–cysteine 48, and cysteine 38–cysteine 54. The segment at 141–183 (TATSTKSNTKESRDSATASPPPAPPPPNILPTPSLELEEAEEQ) is disordered. Over residues 159–170 (SPPPAPPPPNIL) the composition is skewed to pro residues.

The protein belongs to the beta-defensin family.

The protein localises to the secreted. Functionally, has antibacterial activity. In Pan troglodytes (Chimpanzee), this protein is Beta-defensin 129 (DEFB129).